Consider the following 628-residue polypeptide: Venom redulysin 1 (628 aa).

A signal peptide spans 1–19; that stretch reads MSKLWLLLLLVAAFQAVHS. A propeptide spanning residues 20 to 368 is cleaved from the precursor; it reads YPAAESDYLE…EDDVAESDEE (349 aa). The interval 290-313 is disordered; the sequence is DYEEEEEEEEEEEFELEEDYEEDP. Acidic residues predominate over residues 291–313; it reads YEEEEEEEEEEEFELEEDYEEDP.

It belongs to the redulysin-like family. In terms of processing, contains 5 disulfide bonds. In terms of tissue distribution, expressed by the venom gland (posterior main gland) (at protein level).

It localises to the secreted. In terms of biological role, highly abundant protein that may be responsible for the observed disruption of sensory neuron membranes, since it is homologous to proteins such as trialysin, which forms pores in lipid bilayers. Probable insecticidal toxin. The sequence is that of Venom redulysin 1 from Platymeris rhadamanthus (Red spot assassin bug).